A 2183-amino-acid polypeptide reads, in one-letter code: MGRPFNGNNTHVVKQRSDEFERRRLERIEQLGQKFAAVERRDAIDDRMGFTRFSGDEKRVGWLVNMHETLLQSETAERGLAAVDYYFYDEEGGNFKSTVVFRPYFFVICKPHTEHAVKDLMEKMFERVLASTEIVTKEDLNLTNHLTGKKRKAVKLEFHNSEDLSSTRFTLSKIVDRQTQQTEQHLNIYELEGDVDTSTDVESSITGIKEFDVPFETRVAIDLDIRVGNWYEVTKENDTAVLKHMVEREYRADPVVMAYDIETEKAPLRFPDSAVDRIMMISYMIDGEGFLITNREMVSEDIEDFEYTPKPEFPGNFTIFNEPNEKAVLEKWFEHIRDVCPTVMTSYNGDFFDFPFIDKRTAFHGMNLYDEIGWKKVEEERYECSYCVHMDCLNWVKRDSYLPQGSQGLKAVTKVKLSYDPKELDPEKMTPYARDHPQILAEYSVSDAVATYYLYMKYVHPFIFSLCCIIPLNPDAVLRKGTGTLCEMLLMVKAYEGRIILPDKHKPALERHYKGHLVDNETYTGGHVESLAAGVFRSDIMVDFDIDTNSIDELLVNLDETLEFCVTVEAGKKSSDFENLDEVRDQIIEQLQELKSNPKRSDYPLIYHVDVASMYPNIMTTNRLQPDSMVDEKDCAVCDYNRPDKTCARELEWARRVDYYPVSKGDVNNLKQGLVEEYSGGRFGNGSSVEISYDEGMTEREKFQKRKGWAGLSGQEQANKLKERVAAFSLKTKARKTDSETTVQKTIVCQRENPFYVDVVQEFKQRRIDYKTKAKRWNKEAASASDPASREEAKKMAITNDSMQLAHKVILNSFYGYVMRKGSRWYSMEMAGVTCYTGAKIIKIARQTMEGLGIPLELDTDGIWCMLPKTFPEKFKCKFKDGSSYELEYPCSIMNYLVHRDFTNHQYQKLNPETGKYDTHSENSIFFELDGPYKCMMMPTSTDKGKGLKKRYVVFDDRNKIVELKGFEVKRRGELSLIKKFQSQLWDTFLEGSNLVECYAAQARVAEAWLAVIDSRGKNLSDEELIDLVCENKSMSKPVHEYGSQKSTALTTARRLAEIMGDSILTGGKLSTKYIIAVRTKNSMPVPEAKKGSDEDSSTADRAIPTLVFETESLDEKLRFLKRWMGPRWESTDPRDVIDWMYYRERLATTINKLVVIPAILLGLKNPVRGCDPPEWASDIIKQRDNPIKQSTLSSYFVKGKLPTPEPILSEEDEVMEIQVGDIESIGTTPSPSRPPGVPARVVVSKRVRKTVEETDKSTPSLPHKAPDPFADYAAYIKYAKVKWKHQKAQRDRRAHLFGESDNGIASSWVSKNAHLAQDAWHLVSIHAAEKPGQVEASVIIGDKMQRVQINVPRKVYVGSREPLKWDKFTDVTNAMAVAEEEQPKYLYRAVMSEDMYQTEMTNPESPLKDPHVTKIYEADVSPDSRALIELGSTFHLDASTPGILSKGFTHGFEAKWFKSGDSRSYLQNSGLSYAHIVHVVSSAVEIFVITPTWDAPALVFVHQSSSSEKLPDISKEYARLRRGERYKQNMDDCTVFSFPDTMQYEVEYCSNHRRMLQKVSKACDSLSGSRNGQLVFALHSPDRNVDEKVAALARIPCIRLRPVPPSTAAVGWQRDLVRRLIASFLSHGANISYLVEMARYAKMPLCHVQDTRDVIDVSYARRLIQNSVVLWWSAALSTGGALTDQAEVPVANNPGLYTNICFEIKIEHLVLNALLQSAVIQDTEGDIHNELLSNAFNPHALKTLKMVVKEWWEHGDKKRPPQDLLDNFTVWVYAPESRLFSPQLLYHTQNLTKKTFLYLAQECRKHQAQLVYADQHKLVLQTEKTELQLVYSYSNYIVRQIRTHPILKYVSVDITRYWDTFLWMDKWNYGGYSSDVIVDPSKQSESLLMHWHIANFLPETLQQEFSKWVQEYIHLLRLRKYPENRTTDVDDMPSDTPMLTDGDKDDAALLSDKFFGKGVVSYLHPKLVRRVKLLAQKLSDVLSSGDSIDAFKFPVLPGSMIQPETNPVVEFAKYVCHIYGINAKANFEVQILLRDLLNIFDINEFSEEGTFRDPSMSLKLTNMMCFKCKNPCDLDLCKDSCCTKSGFRCPLCNSLYDMVIVEQRLVGQLQRMILEYETQDFRCDKCRRVKEYELTEFCPCSGSWVTIMSAEDVHKELSIYDRCARWFELKMLGSFLRQLGYV.

Residues C2066, C2069, C2090, and C2093 each coordinate Zn(2+). The segment at 2066-2093 (CFKCKNPCDLDLCKDSCCTKSGFRCPLC) adopts a CysA-type zinc-finger fold. Positions 2124, 2127, 2139, and 2141 each coordinate [4Fe-4S] cluster. The short motif at 2124–2141 (CDKCRRVKEYELTEFCPC) is the CysB motif element.

It belongs to the DNA polymerase type-B family. Heterotetramer. Consists of 4 subunits: POL2, DPB2, DPB3 and DPB4. [4Fe-4S] cluster serves as cofactor.

Its subcellular location is the nucleus. The catalysed reaction is DNA(n) + a 2'-deoxyribonucleoside 5'-triphosphate = DNA(n+1) + diphosphate. DNA polymerase II participates in chromosomal DNA replication. The protein is DNA polymerase epsilon catalytic subunit A (POL2) of Yarrowia lipolytica (strain CLIB 122 / E 150) (Yeast).